The sequence spans 292 residues: 4-hydroxy-tetrahydrodipicolinate synthase (292 aa).

Position 45 (threonine 45) interacts with pyruvate. Tyrosine 133 acts as the Proton donor/acceptor in catalysis. The Schiff-base intermediate with substrate role is filled by lysine 162. Isoleucine 204 is a binding site for pyruvate.

This sequence belongs to the DapA family. Homotetramer; dimer of dimers.

It is found in the cytoplasm. The catalysed reaction is L-aspartate 4-semialdehyde + pyruvate = (2S,4S)-4-hydroxy-2,3,4,5-tetrahydrodipicolinate + H2O + H(+). It participates in amino-acid biosynthesis; L-lysine biosynthesis via DAP pathway; (S)-tetrahydrodipicolinate from L-aspartate: step 3/4. Functionally, catalyzes the condensation of (S)-aspartate-beta-semialdehyde [(S)-ASA] and pyruvate to 4-hydroxy-tetrahydrodipicolinate (HTPA). The protein is 4-hydroxy-tetrahydrodipicolinate synthase of Oleidesulfovibrio alaskensis (strain ATCC BAA-1058 / DSM 17464 / G20) (Desulfovibrio alaskensis).